The sequence spans 213 residues: Pyridoxine/pyridoxamine 5'-phosphate oxidase (213 aa).

Substrate-binding positions include 9–12 (RKSY) and Lys67. FMN contacts are provided by residues 62–67 (RVVLIK), 77–78 (YT), Arg83, and Lys84. Positions 124, 128, and 132 each coordinate substrate. FMN contacts are provided by residues 141–142 (QS) and Trp185. Residue 191 to 193 (RLH) coordinates substrate. FMN is bound at residue Arg195.

The protein belongs to the pyridoxamine 5'-phosphate oxidase family. In terms of assembly, homodimer. FMN is required as a cofactor.

The enzyme catalyses pyridoxamine 5'-phosphate + O2 + H2O = pyridoxal 5'-phosphate + H2O2 + NH4(+). The catalysed reaction is pyridoxine 5'-phosphate + O2 = pyridoxal 5'-phosphate + H2O2. It functions in the pathway cofactor metabolism; pyridoxal 5'-phosphate salvage; pyridoxal 5'-phosphate from pyridoxamine 5'-phosphate: step 1/1. It participates in cofactor metabolism; pyridoxal 5'-phosphate salvage; pyridoxal 5'-phosphate from pyridoxine 5'-phosphate: step 1/1. Functionally, catalyzes the oxidation of either pyridoxine 5'-phosphate (PNP) or pyridoxamine 5'-phosphate (PMP) into pyridoxal 5'-phosphate (PLP). The polypeptide is Pyridoxine/pyridoxamine 5'-phosphate oxidase (Methylibium petroleiphilum (strain ATCC BAA-1232 / LMG 22953 / PM1)).